A 212-amino-acid chain; its full sequence is ER lumen protein-retaining receptor 1-A (212 aa).

The Lumenal portion of the chain corresponds to 1 to 4 (MNIF). Residues 5-24 (RFLGDISHLSAIFILLLKIW) traverse the membrane as a helical segment. The Cytoplasmic portion of the chain corresponds to 25–32 (KSRSCAGI). A helical membrane pass occupies residues 33–52 (SGKSQLLFAIVFTARYLDLF). Residues 47 to 48 (RY) form an interaction with the K-D-E-L motif on target proteins region. At 53–58 (TNYISF) the chain is on the lumenal side. Residues 59 to 79 (YNTSMKVVYVASSYATVWMIY) form a helical membrane-spanning segment. Over 80 to 92 (SKFKATYDGNHDT) the chain is Cytoplasmic. A helical membrane pass occupies residues 93–110 (FRVEFLIVPTAILAFLVN). Over 111 to 116 (HDFTPL) the chain is Lumenal. The helical transmembrane segment at 117-135 (EIFWTFSIYLESVAILPQL) threads the bilayer. The Cytoplasmic segment spans residues 136–149 (FMVSKTGEAETITS). Residues 150–168 (HYLFALGIYRTLYLFNWIW) traverse the membrane as a helical segment. Positions 159–169 (RTLYLFNWIWR) are interaction with the K-D-E-L motif on target proteins. The Lumenal portion of the chain corresponds to 169 to 178 (RYQFEGFFDL). The helical transmembrane segment at 179–199 (IAIVAGLVQTVLYCDFFYLYV) threads the bilayer. The Cytoplasmic segment spans residues 200-212 (TKVLKGKKLSLPA). Positions 204 to 207 (KGKK) are important for recycling of cargo proteins with the sequence motif K-D-E-L from the Golgi to the endoplasmic reticulum.

This sequence belongs to the ERD2 family.

The protein resides in the golgi apparatus membrane. Its subcellular location is the cytoplasmic vesicle. It is found in the COPI-coated vesicle membrane. The protein localises to the endoplasmic reticulum membrane. It localises to the endoplasmic reticulum-Golgi intermediate compartment membrane. Functionally, receptor for the C-terminal sequence motif K-D-E-L that is present on endoplasmic reticulum resident proteins and that mediates their recycling from the Golgi back to the endoplasmic reticulum. This is ER lumen protein-retaining receptor 1-A (kdelr1-a) from Xenopus laevis (African clawed frog).